The primary structure comprises 136 residues: Protein PsiE (136 aa).

Transmembrane regions (helical) follow at residues 15-35 (ILQT…VVFL), 55-75 (YELV…ALIV), 82-102 (FHFP…RLII), and 108-128 (PLDV…LWLC).

Belongs to the PsiE family.

The protein resides in the cell inner membrane. The chain is Protein PsiE from Escherichia coli O17:K52:H18 (strain UMN026 / ExPEC).